A 258-amino-acid chain; its full sequence is Pimeloyl-[acyl-carrier protein] methyl ester esterase (258 aa).

The 225-residue stretch at 17–241 (VYLIHGWGAN…KAAHAPFLSH (225 aa)) folds into the AB hydrolase-1 domain. Substrate-binding positions include Trp23, 83 to 84 (SL), and 145 to 149 (FLQLQ). The active-site Nucleophile is Ser83. Active-site residues include Asp207 and His235. Residue His235 participates in substrate binding.

This sequence belongs to the AB hydrolase superfamily. Carboxylesterase BioH family. Monomer.

Its subcellular location is the cytoplasm. It catalyses the reaction 6-carboxyhexanoyl-[ACP] methyl ester + H2O = 6-carboxyhexanoyl-[ACP] + methanol + H(+). Its pathway is cofactor biosynthesis; biotin biosynthesis. In terms of biological role, the physiological role of BioH is to remove the methyl group introduced by BioC when the pimeloyl moiety is complete. It allows to synthesize pimeloyl-ACP via the fatty acid synthetic pathway through the hydrolysis of the ester bonds of pimeloyl-ACP esters. The polypeptide is Pimeloyl-[acyl-carrier protein] methyl ester esterase (Neisseria meningitidis serogroup B (strain ATCC BAA-335 / MC58)).